The sequence spans 248 residues: Ribosomal RNA small subunit methyltransferase J (248 aa).

S-adenosyl-L-methionine contacts are provided by residues 98 to 99, 114 to 115, 150 to 151, and Asp-168; these read RD, ER, and SS.

It belongs to the methyltransferase superfamily. RsmJ family.

The protein resides in the cytoplasm. It carries out the reaction guanosine(1516) in 16S rRNA + S-adenosyl-L-methionine = N(2)-methylguanosine(1516) in 16S rRNA + S-adenosyl-L-homocysteine + H(+). Functionally, specifically methylates the guanosine in position 1516 of 16S rRNA. The sequence is that of Ribosomal RNA small subunit methyltransferase J from Shewanella amazonensis (strain ATCC BAA-1098 / SB2B).